The chain runs to 438 residues: Mannose-1-phosphate guanylyltransferase regulatory subunit alpha (438 aa).

Residues 2–260 (LKAVILIGGP…PNWWSQLKTA (259 aa)) are substrate-binding domain. GDP-alpha-D-mannose contacts are provided by E87 and Q256. The tract at residues 282–438 (LANVGIKRGE…SRSFKNEIIL (157 aa)) is hexapeptide repeat domain. The C-loop stretch occupies residues 373–402 (TPSDPDPNKPFAKMENPPLFNNEGKLNPSI).

Belongs to the transferase hexapeptide repeat family. As to quaternary structure, component of the GMPPA-GMPPB mannose-1-phosphate guanylyltransferase complex composed of 4 GMPPA subunits and 8 GMPPB subunits; the complex is organized into three layers, a central layer made up of 2 GMPPA dimers sandwiched between two layers each made up of 2 GMPPB dimers.

Functionally, regulatory subunit of the GMPPA-GMPPB mannose-1-phosphate guanylyltransferase complex; reduces the catalytic activity of GMPPB when part of the complex. Mediates allosteric feedback inhibition of GMPPB catalytic activity upon binding GDP-alpha-D-mannose. Together with GMPPB regulates GDP-alpha-D-mannose levels. This chain is Mannose-1-phosphate guanylyltransferase regulatory subunit alpha, found in Drosophila melanogaster (Fruit fly).